Reading from the N-terminus, the 352-residue chain is Holliday junction branch migration complex subunit RuvB (352 aa).

Positions 4-191 (TDKLAAPARV…FGIVARLEFY (188 aa)) are large ATPase domain (RuvB-L). ATP-binding positions include L30, R31, G72, K75, T76, T77, 138-140 (EDY), R181, Y191, and R228. T76 is a binding site for Mg(2+). The tract at residues 192–262 (TADELARIVT…MADAALAMLD (71 aa)) is small ATPAse domain (RuvB-S). Residues 265–352 (SVGFDLMDRK…SGASELFGDA (88 aa)) form a head domain (RuvB-H) region. Residues R301, R320, and R325 each contribute to the DNA site.

The protein belongs to the RuvB family. In terms of assembly, homohexamer. Forms an RuvA(8)-RuvB(12)-Holliday junction (HJ) complex. HJ DNA is sandwiched between 2 RuvA tetramers; dsDNA enters through RuvA and exits via RuvB. An RuvB hexamer assembles on each DNA strand where it exits the tetramer. Each RuvB hexamer is contacted by two RuvA subunits (via domain III) on 2 adjacent RuvB subunits; this complex drives branch migration. In the full resolvosome a probable DNA-RuvA(4)-RuvB(12)-RuvC(2) complex forms which resolves the HJ.

It localises to the cytoplasm. The catalysed reaction is ATP + H2O = ADP + phosphate + H(+). Its function is as follows. The RuvA-RuvB-RuvC complex processes Holliday junction (HJ) DNA during genetic recombination and DNA repair, while the RuvA-RuvB complex plays an important role in the rescue of blocked DNA replication forks via replication fork reversal (RFR). RuvA specifically binds to HJ cruciform DNA, conferring on it an open structure. The RuvB hexamer acts as an ATP-dependent pump, pulling dsDNA into and through the RuvAB complex. RuvB forms 2 homohexamers on either side of HJ DNA bound by 1 or 2 RuvA tetramers; 4 subunits per hexamer contact DNA at a time. Coordinated motions by a converter formed by DNA-disengaged RuvB subunits stimulates ATP hydrolysis and nucleotide exchange. Immobilization of the converter enables RuvB to convert the ATP-contained energy into a lever motion, pulling 2 nucleotides of DNA out of the RuvA tetramer per ATP hydrolyzed, thus driving DNA branch migration. The RuvB motors rotate together with the DNA substrate, which together with the progressing nucleotide cycle form the mechanistic basis for DNA recombination by continuous HJ branch migration. Branch migration allows RuvC to scan DNA until it finds its consensus sequence, where it cleaves and resolves cruciform DNA. This Cupriavidus necator (strain ATCC 17699 / DSM 428 / KCTC 22496 / NCIMB 10442 / H16 / Stanier 337) (Ralstonia eutropha) protein is Holliday junction branch migration complex subunit RuvB.